The primary structure comprises 72 residues: Small ribosomal subunit protein bS18 (72 aa).

It belongs to the bacterial ribosomal protein bS18 family. Part of the 30S ribosomal subunit. Forms a tight heterodimer with protein bS6.

Binds as a heterodimer with protein bS6 to the central domain of the 16S rRNA, where it helps stabilize the platform of the 30S subunit. In Francisella tularensis subsp. holarctica (strain OSU18), this protein is Small ribosomal subunit protein bS18.